Consider the following 320-residue polypeptide: Malate dehydrogenase (320 aa).

Residues Gly-10–Gly-15 and Asp-34 contribute to the NAD(+) site. The substrate site is built by Arg-83 and Arg-89. Residues Asn-96 and Ile-119–Asn-121 each bind NAD(+). Residues Asn-121 and Arg-152 each contribute to the substrate site. Residue His-176 is the Proton acceptor of the active site.

Belongs to the LDH/MDH superfamily. MDH type 3 family.

It catalyses the reaction (S)-malate + NAD(+) = oxaloacetate + NADH + H(+). Its function is as follows. Catalyzes the reversible oxidation of malate to oxaloacetate. The chain is Malate dehydrogenase from Brucella melitensis biotype 2 (strain ATCC 23457).